The sequence spans 227 residues: Adenylate kinase (227 aa).

Residue 21 to 26 (GAGKGT) coordinates ATP. Residues 41–70 (ATGDMLRSQVAKQTPLGIEAKKIMDDGKLV) are NMP. AMP contacts are provided by residues threonine 42, arginine 47, 68–70 (KLV), 97–100 (GFPR), and glutamine 104. The tract at residues 138-175 (GRLVHPASGRSYHKVFNPPKTEMKDDITGEDLVQRSDD) is LID. ATP contacts are provided by residues arginine 139 and 148–149 (SY). AMP-binding residues include arginine 172 and arginine 183. Glutamine 211 contributes to the ATP binding site.

This sequence belongs to the adenylate kinase family. AK2 subfamily. Monomer.

The protein localises to the cytoplasm. Its subcellular location is the cytosol. It is found in the mitochondrion intermembrane space. The catalysed reaction is AMP + ATP = 2 ADP. Functionally, catalyzes the reversible transfer of the terminal phosphate group between ATP and AMP. Plays an important role in cellular energy homeostasis and in adenine nucleotide metabolism. Adenylate kinase activity is critical for regulation of the phosphate utilization and the AMP de novo biosynthesis pathways. This Kluyveromyces lactis (strain ATCC 8585 / CBS 2359 / DSM 70799 / NBRC 1267 / NRRL Y-1140 / WM37) (Yeast) protein is Adenylate kinase.